Consider the following 937-residue polypeptide: Periplasmic nitrate reductase (937 aa).

The segment at residues 1-31 is a signal peptide (tat-type signal); sequence MSMNRREFLKTTAAAAAASAVGISIPSEAKA. A 4Fe-4S Mo/W bis-MGD-type domain is found at 40–96; sequence WQWDKAVCRFCGTGCGIMVAVKDDKIVAVKGDPESPVNRGINCIKGYFNAKIMYGAD. Residues Cys-47, Cys-50, Cys-54, and Cys-82 each contribute to the [4Fe-4S] cluster site. Mo-bis(molybdopterin guanine dinucleotide)-binding positions include Lys-84, Gln-152, Asn-177, Cys-181, 214–221, Met-422, Gln-426, Asn-532, Lys-580, Asp-607, and 827–836; these read WGANMAEM and TGRVLEHWHS. Trp-903 contributes to the substrate binding site. Asn-911 and Lys-928 together coordinate Mo-bis(molybdopterin guanine dinucleotide).

It belongs to the prokaryotic molybdopterin-containing oxidoreductase family. NasA/NapA/NarB subfamily. As to quaternary structure, component of the periplasmic nitrate reductase NapAB complex composed of NapA and NapB. It depends on [4Fe-4S] cluster as a cofactor. Mo-bis(molybdopterin guanine dinucleotide) is required as a cofactor. Predicted to be exported by the Tat system. The position of the signal peptide cleavage has not been experimentally proven.

Its subcellular location is the periplasm. The catalysed reaction is 2 Fe(II)-[cytochrome] + nitrate + 2 H(+) = 2 Fe(III)-[cytochrome] + nitrite + H2O. Catalytic subunit of the periplasmic nitrate reductase complex NapAB. Receives electrons from NapB and catalyzes the reduction of nitrate to nitrite. The chain is Periplasmic nitrate reductase from Nautilia profundicola (strain ATCC BAA-1463 / DSM 18972 / AmH).